We begin with the raw amino-acid sequence, 83 residues long: Large ribosomal subunit protein bL27 (83 aa).

The segment at 1–26 is disordered; the sequence is MAHKKAGGSSKNGRDSRGQRRGVKRF.

This sequence belongs to the bacterial ribosomal protein bL27 family.

The sequence is that of Large ribosomal subunit protein bL27 from Desulfosudis oleivorans (strain DSM 6200 / JCM 39069 / Hxd3) (Desulfococcus oleovorans).